Here is an 888-residue protein sequence, read N- to C-terminus: Prodigiosin synthesizing transferase PigC (888 aa).

This sequence belongs to the PigC family.

The protein operates within antibiotic biosynthesis; prodigiosin biosynthesis. Its function is as follows. Involved in the biosynthesis of 2-methyl-3-n-amyl-pyrrole (MAP), one of the terminal products involved in the biosynthesis of the red antibiotic prodigiosin (Pig). Catalyzes the transfer of 2-methyl-3-n-amyl-pyrrole (MAP) to 4-methoxy-2,2'-bipyrrole-5-carbaldehyde (MBC) to yield prodigiosin. It is able to use substrates with a variety of monocyclic rings in place of the pyrrolic ring A of its natural substrate. This is Prodigiosin synthesizing transferase PigC from Serratia marcescens.